An 829-amino-acid chain; its full sequence is MFRLRSISLLSWRAFPLRPFSCESLITQMQKCTNEEQVFDLIETNTATLSEQQVGCAFNVLWQFQKQKTVLEKNVDHVRNHPQFLTLCSITTNHIPAMSDATLVDVLYSIKQFAVESHHPLIEALVTEAWKRLERFDTNVLSIFSTCLADQHLYFSPLMGKIADIVNRRLETIQDLRALSVLMVSISSLISPCFQERLVIRTELLFDTVNSSKVNIARRILLFLRNVKYSHYPLLERCNQVFIRNMSHLDLESISKILNLYQFLQFHSFEFVEAARGRLAEMTLPSDHPESFVRLFAALGPVARPEIKKQLKSTILLLSEELSSQQALIVLGAMEDMESRNSHLLKKIVSVLYKHLDNYKSIELLKIIQALTFLHFQSKELFMKLRELLLSRLEASVIPSEISVLVSALSMLPHPHLSETAVSRIEAVLPQCDFRELNDLVVYLMRWIQSDLVCLASTTGKQLDLLQKLDQLGRHRLQQSTNLDLLWEELKSLKGEWLHESLVEESIAALLRFMDEIDYSNIAKVASFLSRTNYLNTLLLDRIASVAIQQVEKIHPFSVLAIILPFSILNYDPPQKDEFFGACVQCCNSYLGTLDPGTLVFLGFSLAVLEYFPEDLLKKMFNIEFLARLDSQLEILPSSLSARIQFRLMELNRAVCLECPELQVPWFHDRFCQRQFNKDTGVMNGAQQQIYKMLAEVLGGHQCVKPSALSPYYHTVGFECILDKRKKPLPYESHSIAPRKSLGMHWDSRVEPRLPPEAERIAIELLDVRAFCSNIPHLKGKSAMKKRHLEILGYRVIQIPYFEWNSMAMSTKDARMDYLREHLFGEGKS.

Lysine 346 carries the post-translational modification N6-acetyllysine. The region spanning 761–821 (IAIELLDVRA…KDARMDYLRE (61 aa)) is the RAP domain.

Belongs to the FAST kinase family. Expression detected in spleen, testis, colon, heart, smooth muscle, kidney, brain, lung, liver, brown and white adipose tissue with highest expression in heart and brown adipose tissue.

It localises to the mitochondrion. Its function is as follows. Involved in the down-regulation of mitochondrial MT-ND3 mRNA levels which leads to decreased respiratory complex I abundance and activity. This chain is FAST kinase domain-containing protein 1, mitochondrial (Fastkd1), found in Mus musculus (Mouse).